Consider the following 153-residue polypeptide: Heavy metal-associated isoprenylated plant protein 25 (153 aa).

An HMA domain is found at 24–88; it reads LQTVDVRVLI…IIHRTGKRAE (65 aa). The a metal cation site is built by Cys35 and Cys38. Cys150 bears the Cysteine methyl ester mark. Cys150 carries S-farnesyl cysteine lipidation. Positions 151–153 are cleaved as a propeptide — removed in mature form; it reads VVM.

It belongs to the HIPP family. In terms of tissue distribution, expressed in roots, shoot apical meristem, trichomes and flower buds.

It localises to the membrane. In terms of biological role, heavy-metal-binding protein. Binds cadmium. May be involved in cadmium transport and play a role in cadmium detoxification. This Arabidopsis thaliana (Mouse-ear cress) protein is Heavy metal-associated isoprenylated plant protein 25.